The sequence spans 311 residues: Malate dehydrogenase (311 aa).

Residues 7-13 (GAAGGIG) and Asp34 each bind NAD(+). Substrate contacts are provided by Arg81 and Arg87. NAD(+) contacts are provided by residues Asn94 and 117–119 (ITN). 2 residues coordinate substrate: Asn119 and Arg153. His177 functions as the Proton acceptor in the catalytic mechanism. NAD(+) is bound at residue Met227.

It belongs to the LDH/MDH superfamily. MDH type 1 family. As to quaternary structure, homodimer.

It carries out the reaction (S)-malate + NAD(+) = oxaloacetate + NADH + H(+). Functionally, catalyzes the reversible oxidation of malate to oxaloacetate. The polypeptide is Malate dehydrogenase (Shewanella frigidimarina (strain NCIMB 400)).